We begin with the raw amino-acid sequence, 457 residues long: Siroheme synthase (457 aa).

Residues 1–204 are precorrin-2 dehydrogenase /sirohydrochlorin ferrochelatase; that stretch reads MDHLPIFCQL…NDQKAITETT (204 aa). NAD(+) is bound by residues 22-23 and 43-44; these read DV and LA. Phosphoserine is present on serine 128. Residues 216 to 457 form a uroporphyrinogen-III C-methyltransferase region; it reads GEVVLVGAGP…RDKLNWFSNH (242 aa). Proline 225 lines the S-adenosyl-L-methionine pocket. Residue aspartate 248 is the Proton acceptor of the active site. Lysine 270 serves as the catalytic Proton donor. S-adenosyl-L-methionine-binding positions include 301-303, isoleucine 306, 331-332, methionine 382, and glycine 411; these read GGD and TA.

In the N-terminal section; belongs to the precorrin-2 dehydrogenase / sirohydrochlorin ferrochelatase family. It in the C-terminal section; belongs to the precorrin methyltransferase family.

The enzyme catalyses uroporphyrinogen III + 2 S-adenosyl-L-methionine = precorrin-2 + 2 S-adenosyl-L-homocysteine + H(+). It catalyses the reaction precorrin-2 + NAD(+) = sirohydrochlorin + NADH + 2 H(+). The catalysed reaction is siroheme + 2 H(+) = sirohydrochlorin + Fe(2+). Its pathway is cofactor biosynthesis; adenosylcobalamin biosynthesis; precorrin-2 from uroporphyrinogen III: step 1/1. It functions in the pathway cofactor biosynthesis; adenosylcobalamin biosynthesis; sirohydrochlorin from precorrin-2: step 1/1. It participates in porphyrin-containing compound metabolism; siroheme biosynthesis; precorrin-2 from uroporphyrinogen III: step 1/1. The protein operates within porphyrin-containing compound metabolism; siroheme biosynthesis; siroheme from sirohydrochlorin: step 1/1. Its pathway is porphyrin-containing compound metabolism; siroheme biosynthesis; sirohydrochlorin from precorrin-2: step 1/1. In terms of biological role, multifunctional enzyme that catalyzes the SAM-dependent methylations of uroporphyrinogen III at position C-2 and C-7 to form precorrin-2 via precorrin-1. Then it catalyzes the NAD-dependent ring dehydrogenation of precorrin-2 to yield sirohydrochlorin. Finally, it catalyzes the ferrochelation of sirohydrochlorin to yield siroheme. In Escherichia coli O7:K1 (strain IAI39 / ExPEC), this protein is Siroheme synthase.